The sequence spans 359 residues: DNA replication and repair protein RecF (359 aa).

30–37 (GKNGIGKT) contributes to the ATP binding site.

The protein belongs to the RecF family.

It is found in the cytoplasm. The RecF protein is involved in DNA metabolism; it is required for DNA replication and normal SOS inducibility. RecF binds preferentially to single-stranded, linear DNA. It also seems to bind ATP. In Flavobacterium johnsoniae (strain ATCC 17061 / DSM 2064 / JCM 8514 / BCRC 14874 / CCUG 350202 / NBRC 14942 / NCIMB 11054 / UW101) (Cytophaga johnsonae), this protein is DNA replication and repair protein RecF.